We begin with the raw amino-acid sequence, 32 residues long: Snaclec (32 aa).

Dimer; disulfide-linked. Expressed by the venom gland.

It localises to the secreted. Its function is as follows. Interferes with one step of hemostasis (modulation of platelet aggregation, or coagulation cascade, for example). This Bothrops diporus (Chaco lancehead) protein is Snaclec.